The following is a 319-amino-acid chain: 4-hydroxy-3-methylbut-2-enyl diphosphate reductase (319 aa).

Cys18 provides a ligand contact to [4Fe-4S] cluster. 2 residues coordinate (2E)-4-hydroxy-3-methylbut-2-enyl diphosphate: His47 and His81. Dimethylallyl diphosphate-binding residues include His47 and His81. Residues His47 and His81 each coordinate isopentenyl diphosphate. Cys103 serves as a coordination point for [4Fe-4S] cluster. Residue His131 participates in (2E)-4-hydroxy-3-methylbut-2-enyl diphosphate binding. His131 lines the dimethylallyl diphosphate pocket. His131 contacts isopentenyl diphosphate. Glu133 functions as the Proton donor in the catalytic mechanism. Thr172 is a binding site for (2E)-4-hydroxy-3-methylbut-2-enyl diphosphate. Cys202 provides a ligand contact to [4Fe-4S] cluster. Ser230, Ser231, Asn232, and Ser275 together coordinate (2E)-4-hydroxy-3-methylbut-2-enyl diphosphate. The dimethylallyl diphosphate site is built by Ser230, Ser231, Asn232, and Ser275. Residues Ser230, Ser231, Asn232, and Ser275 each contribute to the isopentenyl diphosphate site.

The protein belongs to the IspH family. It depends on [4Fe-4S] cluster as a cofactor.

The catalysed reaction is isopentenyl diphosphate + 2 oxidized [2Fe-2S]-[ferredoxin] + H2O = (2E)-4-hydroxy-3-methylbut-2-enyl diphosphate + 2 reduced [2Fe-2S]-[ferredoxin] + 2 H(+). The enzyme catalyses dimethylallyl diphosphate + 2 oxidized [2Fe-2S]-[ferredoxin] + H2O = (2E)-4-hydroxy-3-methylbut-2-enyl diphosphate + 2 reduced [2Fe-2S]-[ferredoxin] + 2 H(+). The protein operates within isoprenoid biosynthesis; dimethylallyl diphosphate biosynthesis; dimethylallyl diphosphate from (2E)-4-hydroxy-3-methylbutenyl diphosphate: step 1/1. It functions in the pathway isoprenoid biosynthesis; isopentenyl diphosphate biosynthesis via DXP pathway; isopentenyl diphosphate from 1-deoxy-D-xylulose 5-phosphate: step 6/6. Functionally, catalyzes the conversion of 1-hydroxy-2-methyl-2-(E)-butenyl 4-diphosphate (HMBPP) into a mixture of isopentenyl diphosphate (IPP) and dimethylallyl diphosphate (DMAPP). Acts in the terminal step of the DOXP/MEP pathway for isoprenoid precursor biosynthesis. This Methylocella silvestris (strain DSM 15510 / CIP 108128 / LMG 27833 / NCIMB 13906 / BL2) protein is 4-hydroxy-3-methylbut-2-enyl diphosphate reductase.